Consider the following 156-residue polypeptide: MPRRREVAKRVILPDPKYGDRVVAKLVNIIMLDGKKSTAEKALYGALELASEKVNEDPVKILKKSLDNIKPMLEVKSRRVGGSTYQVPVEVRAERRVSLAMRWLVKYANDRSEKTVTDKLAGEILDAYNNRGAAVKKREDTHKMAEANRAFAHYRW.

The protein belongs to the universal ribosomal protein uS7 family. In terms of assembly, part of the 30S ribosomal subunit. Contacts proteins S9 and S11.

In terms of biological role, one of the primary rRNA binding proteins, it binds directly to 16S rRNA where it nucleates assembly of the head domain of the 30S subunit. Is located at the subunit interface close to the decoding center, probably blocks exit of the E-site tRNA. This Geotalea uraniireducens (strain Rf4) (Geobacter uraniireducens) protein is Small ribosomal subunit protein uS7.